The sequence spans 209 residues: LexA repressor (209 aa).

The segment at residues 29–49 (VREIGSAIGLSSTSTVHGHID) is a DNA-binding region (H-T-H motif). Active-site for autocatalytic cleavage activity residues include Ser-130 and Lys-168.

Belongs to the peptidase S24 family. Homodimer.

It catalyses the reaction Hydrolysis of Ala-|-Gly bond in repressor LexA.. Functionally, represses a number of genes involved in the response to DNA damage (SOS response), including recA and lexA. In the presence of single-stranded DNA, RecA interacts with LexA causing an autocatalytic cleavage which disrupts the DNA-binding part of LexA, leading to derepression of the SOS regulon and eventually DNA repair. In Pediococcus pentosaceus (strain ATCC 25745 / CCUG 21536 / LMG 10740 / 183-1w), this protein is LexA repressor.